Here is a 61-residue protein sequence, read N- to C-terminus: UPF0434 protein PFLU_3771 (61 aa).

Belongs to the UPF0434 family.

The polypeptide is UPF0434 protein PFLU_3771 (Pseudomonas fluorescens (strain SBW25)).